A 490-amino-acid polypeptide reads, in one-letter code: Probable cytochrome P450 308a1 (490 aa).

Cys-431 contributes to the heme binding site.

This sequence belongs to the cytochrome P450 family. The cofactor is heme.

It is found in the endoplasmic reticulum membrane. The protein localises to the microsome membrane. In terms of biological role, may be involved in the metabolism of insect hormones and in the breakdown of synthetic insecticides. This is Probable cytochrome P450 308a1 (Cyp308a1) from Drosophila melanogaster (Fruit fly).